Consider the following 425-residue polypeptide: MTFQNTREFAKQLDAQDALNHYQEQFIFPKVNDKRVIYFTGNSLGLQPKRTKAYIDEVMNDWAELAVEGHFYAEKPWWDYQERFSEPLSKIVGALPSEVTVMNTLTVNLHLLMVSFYQPKGKRYKIICEEKAFPSDQYMFQSQVHFHGYKPEDAIVEIKRREGEHNIRLEDVLAKIEEVGDELALVLIGGVNYYTGQVFDIKTITAAGQKAGAKVGWDLAHAAGNIKLELHDWNVDFAAWCSYKYMNSGPGNASGVFVHERHHNDPDLPRFAGWWGHNKERRFKMEPNFDPVHGAGGWQISNLPVLSLAPYLASVEMFAEVGMDALIAKRDHITSYLEFILHEIDKEVESTFEIITPSNPEERASQLSVFLHGEGRSLFDYLMKNGVITDWREPNVIRLAPVPLYCSYEDMYDFGQILKKGILGK.

Residues Leu105, Thr106, 133–136, Asp218, His221, and Tyr243 each bind pyridoxal 5'-phosphate; that span reads FPSD. Lys244 carries the post-translational modification N6-(pyridoxal phosphate)lysine. The pyridoxal 5'-phosphate site is built by Trp274 and Asn302.

This sequence belongs to the kynureninase family. In terms of assembly, homodimer. It depends on pyridoxal 5'-phosphate as a cofactor.

It carries out the reaction L-kynurenine + H2O = anthranilate + L-alanine + H(+). The enzyme catalyses 3-hydroxy-L-kynurenine + H2O = 3-hydroxyanthranilate + L-alanine + H(+). The protein operates within amino-acid degradation; L-kynurenine degradation; L-alanine and anthranilate from L-kynurenine: step 1/1. It functions in the pathway cofactor biosynthesis; NAD(+) biosynthesis; quinolinate from L-kynurenine: step 2/3. Functionally, catalyzes the cleavage of L-kynurenine (L-Kyn) and L-3-hydroxykynurenine (L-3OHKyn) into anthranilic acid (AA) and 3-hydroxyanthranilic acid (3-OHAA), respectively. The protein is Kynureninase of Flavobacterium johnsoniae (strain ATCC 17061 / DSM 2064 / JCM 8514 / BCRC 14874 / CCUG 350202 / NBRC 14942 / NCIMB 11054 / UW101) (Cytophaga johnsonae).